The primary structure comprises 366 residues: Erythronate-4-phosphate dehydrogenase (366 aa).

Positions 46 and 67 each coordinate substrate. 2 residues coordinate NAD(+): aspartate 147 and threonine 175. The active site involves arginine 208. Aspartate 228 is a binding site for NAD(+). Residue glutamate 233 is part of the active site. The active-site Proton donor is histidine 250. Glycine 253 serves as a coordination point for NAD(+). Position 254 (tyrosine 254) interacts with substrate.

It belongs to the D-isomer specific 2-hydroxyacid dehydrogenase family. PdxB subfamily. As to quaternary structure, homodimer.

The protein resides in the cytoplasm. It carries out the reaction 4-phospho-D-erythronate + NAD(+) = (R)-3-hydroxy-2-oxo-4-phosphooxybutanoate + NADH + H(+). The protein operates within cofactor biosynthesis; pyridoxine 5'-phosphate biosynthesis; pyridoxine 5'-phosphate from D-erythrose 4-phosphate: step 2/5. In terms of biological role, catalyzes the oxidation of erythronate-4-phosphate to 3-hydroxy-2-oxo-4-phosphonooxybutanoate. This Coxiella burnetii (strain RSA 331 / Henzerling II) protein is Erythronate-4-phosphate dehydrogenase.